The chain runs to 771 residues: Transcription factor TAS2 (771 aa).

Residues 33–53 (RSRAESASGPQQPSRRQPQTS) form a disordered region. Residues 42-51 (PQQPSRRQPQ) show a composition bias toward low complexity. Positions 54–80 (CDLCRSRKIKCDRGTPCGNCRTRGLAC) form a DNA-binding region, zn(2)-C6 fungal-type. Residues 125–150 (AVGGSGNAENGAHGDATPRVPLSGLE) are disordered.

The protein resides in the nucleus. In terms of biological role, transcription factor; part of the gene cluster that mediates the biosynthesis of the toxin tenuazonic acid (TeA), an inhibitor of protein biosynthesis on ribosomes by suppressing the release of new protein. Directly regulates the expression of the hybrid PKS-NRPS synthetase TAS1 and the subsequent production of TeA. The polypeptide is Transcription factor TAS2 (Pyricularia oryzae (strain 70-15 / ATCC MYA-4617 / FGSC 8958) (Rice blast fungus)).